The sequence spans 337 residues: 1-aminocyclopropane-1-carboxylate deaminase (337 aa).

An N6-(pyridoxal phosphate)lysine modification is found at Lys-50. Ser-77 acts as the Nucleophile in catalysis.

This sequence belongs to the ACC deaminase/D-cysteine desulfhydrase family. As to quaternary structure, homotrimer. Pyridoxal 5'-phosphate is required as a cofactor.

It carries out the reaction 1-aminocyclopropane-1-carboxylate + H2O = 2-oxobutanoate + NH4(+). In terms of biological role, catalyzes a cyclopropane ring-opening reaction, the irreversible conversion of 1-aminocyclopropane-1-carboxylate (ACC) to ammonia and alpha-ketobutyrate. Allows growth on ACC as a nitrogen source. The polypeptide is 1-aminocyclopropane-1-carboxylate deaminase (Bradyrhizobium diazoefficiens (strain JCM 10833 / BCRC 13528 / IAM 13628 / NBRC 14792 / USDA 110)).